Consider the following 313-residue polypeptide: 4-diphosphocytidyl-2-C-methyl-D-erythritol kinase (313 aa).

The active site involves K10. P95–S105 lines the ATP pocket. D136 is an active-site residue. A disordered region spans residues H289–T313. Positions V292 to R304 are enriched in low complexity.

This sequence belongs to the GHMP kinase family. IspE subfamily.

The enzyme catalyses 4-CDP-2-C-methyl-D-erythritol + ATP = 4-CDP-2-C-methyl-D-erythritol 2-phosphate + ADP + H(+). Its pathway is isoprenoid biosynthesis; isopentenyl diphosphate biosynthesis via DXP pathway; isopentenyl diphosphate from 1-deoxy-D-xylulose 5-phosphate: step 3/6. Catalyzes the phosphorylation of the position 2 hydroxy group of 4-diphosphocytidyl-2C-methyl-D-erythritol. The sequence is that of 4-diphosphocytidyl-2-C-methyl-D-erythritol kinase from Anaeromyxobacter sp. (strain K).